The chain runs to 251 residues: Coproheme decarboxylase (251 aa).

Fe-coproporphyrin III contacts are provided by residues R133, 147-151, H174, Q187, and S225; that span reads YPMSK. Y147 is a catalytic residue.

This sequence belongs to the ChdC family. Type 1 subfamily. Fe-coproporphyrin III is required as a cofactor.

The enzyme catalyses Fe-coproporphyrin III + 2 H2O2 + 2 H(+) = heme b + 2 CO2 + 4 H2O. It carries out the reaction Fe-coproporphyrin III + H2O2 + H(+) = harderoheme III + CO2 + 2 H2O. The catalysed reaction is harderoheme III + H2O2 + H(+) = heme b + CO2 + 2 H2O. The protein operates within porphyrin-containing compound metabolism; protoheme biosynthesis. Its function is as follows. Involved in coproporphyrin-dependent heme b biosynthesis. Catalyzes the decarboxylation of Fe-coproporphyrin III (coproheme) to heme b (protoheme IX), the last step of the pathway. The reaction occurs in a stepwise manner with a three-propionate intermediate. This Listeria monocytogenes serotype 4b (strain CLIP80459) protein is Coproheme decarboxylase.